The chain runs to 245 residues: tRNA pseudouridine synthase A (245 aa).

Residue Asp-52 is the Nucleophile of the active site. Tyr-111 provides a ligand contact to substrate.

This sequence belongs to the tRNA pseudouridine synthase TruA family. As to quaternary structure, homodimer.

It carries out the reaction uridine(38/39/40) in tRNA = pseudouridine(38/39/40) in tRNA. Formation of pseudouridine at positions 38, 39 and 40 in the anticodon stem and loop of transfer RNAs. The chain is tRNA pseudouridine synthase A from Rickettsia rickettsii (strain Iowa).